Reading from the N-terminus, the 444-residue chain is Divalent metal cation transporter MntH (444 aa).

11 helical membrane-spanning segments follow: residues 31-51 (GGHWWFRLLAFLGPGYMVSVG), 68-88 (FGYLLLSVILLSNLMAIVLQG), 115-135 (LALWGLCELAIIACDLAEVIG), 146-166 (IPLTLGAIITALDVVLVLLLM), 175-195 (AFVMALLLVIFVCFGIQIALA), 212-232 (VVTNPHALYLAIGIIGATVMP), 267-287 (VALMFALFINAAILILAAAVF), 303-323 (ALLAPMLGVGLASTLFAVALL), 356-376 (LLTRGIAIVPVVVVTWLYGEA), 381-401 (LLVLSQVVLSMQLPFAVIPLV), and 413-433 (LVAPAWLVRLAWVIALVIVGL).

It belongs to the NRAMP family.

Its subcellular location is the cell inner membrane. Its function is as follows. H(+)-stimulated, divalent metal cation uptake system. The polypeptide is Divalent metal cation transporter MntH (Xanthomonas campestris pv. campestris (strain ATCC 33913 / DSM 3586 / NCPPB 528 / LMG 568 / P 25)).